We begin with the raw amino-acid sequence, 148 residues long: Small ribosomal subunit protein bS16 (148 aa).

Residues 111–122 (AAAGEEPVAEAT) are compositionally biased toward low complexity. The tract at residues 111–148 (AAAGEEPVAEATTPKKKGGKKAEAEDKAEEQKSEEGQA) is disordered. Positions 130–148 (KKAEAEDKAEEQKSEEGQA) are enriched in basic and acidic residues.

This sequence belongs to the bacterial ribosomal protein bS16 family.

This is Small ribosomal subunit protein bS16 from Saccharopolyspora erythraea (strain ATCC 11635 / DSM 40517 / JCM 4748 / NBRC 13426 / NCIMB 8594 / NRRL 2338).